Consider the following 447-residue polypeptide: Hemopexin (447 aa).

The N-terminal stretch at 1–18 (MRLIQALSLCLALSLSLA) is a signal peptide. The segment at 20-44 (PPQHKEDHSHKGKPGGEGHKHELHH) is disordered. The segment covering 22–44 (QHKEDHSHKGKPGGEGHKHELHH) has biased composition (basic and acidic residues). Hemopexin repeat units lie at residues 53-93 (GIEF…FPEL), 99-151 (LGHV…FPGI), 152-197 (PDHL…FKSM), 198-243 (PNCT…FMRC), 262-304 (RVHL…FKEL), 305-351 (HSEV…VLGI), 352-395 (EGPV…TITQ), and 396-441 (FKRI…VSQQ). The N-linked (GlcNAc...) asparagine glycan is linked to Asn87. N-linked (GlcNAc...) asparagine glycans are attached at residues Asn168 and Asn199. His293 provides a ligand contact to heme.

It belongs to the hemopexin family.

It localises to the secreted. Functionally, binds heme and transports it to the liver for breakdown and iron recovery, after which the free hemopexin returns to the circulation. In Danio rerio (Zebrafish), this protein is Hemopexin.